The chain runs to 379 residues: Very late expression factor 1 (379 aa).

The Tyr recombinase domain maps to 169–348; that stretch reads VIDTILNFIN…YNIGLDETSS (180 aa). Catalysis depends on residues R210, K239, R303, and H326. Catalysis depends on Y335, which acts as the O-(3'-phospho-DNA)-tyrosine intermediate. The span at 346-358 shows a compositional bias: acidic residues; it reads TSSEEENNNDDDD. Residues 346–379 form a disordered region; that stretch reads TSSEEENNNDDDDAQHNRNSSGSSGESLLYYRNE. The span at 362 to 379 shows a compositional bias: low complexity; it reads NRNSSGSSGESLLYYRNE.

It belongs to the 'phage' integrase family.

In terms of biological role, plays a role in nucleocapsid assembly and serves an essential function during the final stages of the DNA packaging process. Participates in the processing of branched DNA molecules at the late stages of viral genome replication. This Lepidoptera (butterflies and moths) protein is Very late expression factor 1 (VLF-1).